Reading from the N-terminus, the 1141-residue chain is Isoleucine--tRNA ligase (1141 aa).

Positions 50–60 (PSANGMPGIHH) match the 'HIGH' region motif. Positions 689 to 693 (KMSKR) match the 'KMSKS' region motif. Lys692 provides a ligand contact to ATP.

This sequence belongs to the class-I aminoacyl-tRNA synthetase family. IleS type 2 subfamily. Monomer. It depends on Zn(2+) as a cofactor.

It localises to the cytoplasm. It catalyses the reaction tRNA(Ile) + L-isoleucine + ATP = L-isoleucyl-tRNA(Ile) + AMP + diphosphate. Catalyzes the attachment of isoleucine to tRNA(Ile). As IleRS can inadvertently accommodate and process structurally similar amino acids such as valine, to avoid such errors it has two additional distinct tRNA(Ile)-dependent editing activities. One activity is designated as 'pretransfer' editing and involves the hydrolysis of activated Val-AMP. The other activity is designated 'posttransfer' editing and involves deacylation of mischarged Val-tRNA(Ile). The polypeptide is Isoleucine--tRNA ligase (Bacteroides fragilis (strain ATCC 25285 / DSM 2151 / CCUG 4856 / JCM 11019 / LMG 10263 / NCTC 9343 / Onslow / VPI 2553 / EN-2)).